Consider the following 448-residue polypeptide: Na(+)-translocating NADH-quinone reductase subunit A (448 aa).

It belongs to the NqrA family. In terms of assembly, composed of six subunits; NqrA, NqrB, NqrC, NqrD, NqrE and NqrF.

The enzyme catalyses a ubiquinone + n Na(+)(in) + NADH + H(+) = a ubiquinol + n Na(+)(out) + NAD(+). Its function is as follows. NQR complex catalyzes the reduction of ubiquinone-1 to ubiquinol by two successive reactions, coupled with the transport of Na(+) ions from the cytoplasm to the periplasm. NqrA to NqrE are probably involved in the second step, the conversion of ubisemiquinone to ubiquinol. The polypeptide is Na(+)-translocating NADH-quinone reductase subunit A (Glaesserella parasuis serovar 5 (strain SH0165) (Haemophilus parasuis)).